Consider the following 882-residue polypeptide: Alanine--tRNA ligase (882 aa).

Positions 576, 580, 678, and 682 each coordinate Zn(2+).

It belongs to the class-II aminoacyl-tRNA synthetase family. Zn(2+) is required as a cofactor.

The protein resides in the cytoplasm. The catalysed reaction is tRNA(Ala) + L-alanine + ATP = L-alanyl-tRNA(Ala) + AMP + diphosphate. In terms of biological role, catalyzes the attachment of alanine to tRNA(Ala) in a two-step reaction: alanine is first activated by ATP to form Ala-AMP and then transferred to the acceptor end of tRNA(Ala). Also edits incorrectly charged Ser-tRNA(Ala) and Gly-tRNA(Ala) via its editing domain. In Anaplasma marginale (strain St. Maries), this protein is Alanine--tRNA ligase.